The primary structure comprises 326 residues: Tetraacyldisaccharide 4'-kinase (326 aa).

Residue 52–59 (TLGGAGKT) coordinates ATP.

Belongs to the LpxK family.

The catalysed reaction is a lipid A disaccharide + ATP = a lipid IVA + ADP + H(+). The protein operates within glycolipid biosynthesis; lipid IV(A) biosynthesis; lipid IV(A) from (3R)-3-hydroxytetradecanoyl-[acyl-carrier-protein] and UDP-N-acetyl-alpha-D-glucosamine: step 6/6. Transfers the gamma-phosphate of ATP to the 4'-position of a tetraacyldisaccharide 1-phosphate intermediate (termed DS-1-P) to form tetraacyldisaccharide 1,4'-bis-phosphate (lipid IVA). This chain is Tetraacyldisaccharide 4'-kinase, found in Methylobacterium radiotolerans (strain ATCC 27329 / DSM 1819 / JCM 2831 / NBRC 15690 / NCIMB 10815 / 0-1).